Reading from the N-terminus, the 347-residue chain is NADH-ubiquinone oxidoreductase chain 2 (347 aa).

Transmembrane regions (helical) follow at residues 1-21 (MNPLVFTMIMSTVMLGTAIVA), 25-45 (HWLMAWIGFEMNMLAVIPILM), 59-79 (YFLTQATASMLLMLAVTMNLV), 111-131 (FHFWVPEVTQGISLPSGLILL), 149-169 (INLDLLMMLINLSIAIGGWGG), 178-198 (IMAYSSIAHMGWMTAILTYNP), 201-221 (TLLNLMIYILLTTTTFMMFML), 237-257 (MPLLTTAILLTMLSLGGLPPL), 274-294 (NSVIMPTTMAVMALLNLYFYM), and 326-346 (LSPLIILSTLILPLSPMLALL).

Belongs to the complex I subunit 2 family. As to quaternary structure, core subunit of respiratory chain NADH dehydrogenase (Complex I) which is composed of 45 different subunits. Interacts with TMEM242.

The protein localises to the mitochondrion inner membrane. The catalysed reaction is a ubiquinone + NADH + 5 H(+)(in) = a ubiquinol + NAD(+) + 4 H(+)(out). Its function is as follows. Core subunit of the mitochondrial membrane respiratory chain NADH dehydrogenase (Complex I) which catalyzes electron transfer from NADH through the respiratory chain, using ubiquinone as an electron acceptor. Essential for the catalytic activity and assembly of complex I. This chain is NADH-ubiquinone oxidoreductase chain 2, found in Pteropus rodricensis (Rodriguez flying fox).